Here is a 657-residue protein sequence, read N- to C-terminus: Pyoverdine export ATP-binding/permease protein PvdT (657 aa).

The region spanning 6–245 (IDLQDIRKSY…ASTNPGALQA (240 aa)) is the ABC transporter domain. 43 to 50 (GASGSGKS) contacts ATP. The next 4 membrane-spanning stretches (helical) occupy residues 285–305 (ALTL…LAVG), 539–559 (IAAI…LMTV), 590–610 (LSVV…GVLI), and 620–640 (LVAI…FGFM).

This sequence belongs to the ABC transporter superfamily. Macrolide exporter (TC 3.A.1.122) family. As to quaternary structure, part of the tripartite efflux system PvdRT-OpmQ, which is composed of an inner membrane component with both ATPase and permease domains, PvdT, a periplasmic membrane fusion protein, PvdR, and an outer membrane component, OpmQ.

Its subcellular location is the cell inner membrane. Its function is as follows. Part of the tripartite efflux system PvdRT-OpmQ required for the secretion into the extracellular milieu of the siderophore pyoverdine (PVD), which is involved in iron acquisition. This subunit binds PVD and drives its secretion by hydrolyzing ATP. The system is responsible for export of newly synthesized PVD after the final steps of biosynthesis have taken place in the periplasm. It is also responsible for recycling of PVD after internalization of ferri-PVD into the periplasm by the outer-membrane receptor FpvA and release of iron from PVD, thus making PVD available for new cycles of iron uptake. The sequence is that of Pyoverdine export ATP-binding/permease protein PvdT from Pseudomonas fluorescens (strain Pf0-1).